A 199-amino-acid polypeptide reads, in one-letter code: HTH-type transcriptional regulator BetI (199 aa).

One can recognise an HTH tetR-type domain in the interval 8-68 (EIRKPQLVKA…ETMREILRQL (61 aa)). Residues 31 to 50 (SISLISKEAGVSTGIINHYF) constitute a DNA-binding region (H-T-H motif).

It participates in amine and polyamine biosynthesis; betaine biosynthesis via choline pathway [regulation]. Its function is as follows. Repressor involved in the biosynthesis of the osmoprotectant glycine betaine. It represses transcription of the choline transporter BetT and the genes of BetAB involved in the synthesis of glycine betaine. The polypeptide is HTH-type transcriptional regulator BetI (Vibrio parahaemolyticus serotype O3:K6 (strain RIMD 2210633)).